Here is a 438-residue protein sequence, read N- to C-terminus: Methylenetetrahydrofolate--tRNA-(uracil-5-)-methyltransferase TrmFO (438 aa).

7-12 (GAGLAG) is a binding site for FAD.

This sequence belongs to the MnmG family. TrmFO subfamily. Requires FAD as cofactor.

The protein resides in the cytoplasm. It carries out the reaction uridine(54) in tRNA + (6R)-5,10-methylene-5,6,7,8-tetrahydrofolate + NADH + H(+) = 5-methyluridine(54) in tRNA + (6S)-5,6,7,8-tetrahydrofolate + NAD(+). It catalyses the reaction uridine(54) in tRNA + (6R)-5,10-methylene-5,6,7,8-tetrahydrofolate + NADPH + H(+) = 5-methyluridine(54) in tRNA + (6S)-5,6,7,8-tetrahydrofolate + NADP(+). In terms of biological role, catalyzes the folate-dependent formation of 5-methyl-uridine at position 54 (M-5-U54) in all tRNAs. In Sulfurihydrogenibium sp. (strain YO3AOP1), this protein is Methylenetetrahydrofolate--tRNA-(uracil-5-)-methyltransferase TrmFO.